Here is an 88-residue protein sequence, read N- to C-terminus: FXYD domain-containing ion transport regulator 3 (88 aa).

A signal peptide (not cleaved) is located at residues 1-20 (MQEVVLSLLVLLAGLPTLDA). At 1-38 (MQEVVLSLLVLLAGLPTLDANDPENKNDPFYYDWYSLR) the chain is on the extracellular side. The chain crosses the membrane as a helical span at residues 39–59 (VGGLICAGILCALGIIVLMSG). At 60–88 (KCKCKFRQKPSHRPGEGPPLITPGSAHNC) the chain is on the cytoplasmic side. The interval 67–88 (QKPSHRPGEGPPLITPGSAHNC) is disordered.

The protein belongs to the FXYD family. As to quaternary structure, regulatory subunit of the sodium/potassium-transporting ATPase which is composed of a catalytic alpha subunit, a non-catalytic beta subunit and an additional regulatory subunit. Interacts with catalytic alpha subunit ATP1A1. Also interacts with non-catalytic beta subunit ATP1B1. Interacts with the ATP1A1-ATP1B1, ATP1A2-ATP1B1 and ATP1A3-ATP1B1 NKA isozymes. In terms of processing, glutathionylated. Expressed at high levels in heart, skeletal muscle and liver with low levels of expression in breast, brain, lung, stomach and colon. In the gastric gland, mainly expressed in the mucus cells forming the upper part of the gland and is absent from the parietal cells.

Its subcellular location is the cell membrane. Its function is as follows. Associates with and regulates the activity of the sodium/potassium-transporting ATPase (NKA) which transports Na(+) out of the cell and K(+) into the cell. Reduces glutathionylation of the NKA beta-1 subunit ATP1B1, thus reversing glutathionylation-mediated inhibition of ATP1B1. Induces a hyperpolarization-activated chloride current when expressed in Xenopus oocytes. This Mus musculus (Mouse) protein is FXYD domain-containing ion transport regulator 3 (Fxyd3).